We begin with the raw amino-acid sequence, 673 residues long: UvrABC system protein B (673 aa).

A Helicase ATP-binding domain is found at 26–183 (EGLEDGLAHQ…RRLAELQYAR (158 aa)). Residue 39–46 (GVTGSGKT) coordinates ATP. The Beta-hairpin signature appears at 92-115 (YYDYYQPEAYVPSSDTFIEKDASV). A Helicase C-terminal domain is found at 431–597 (QVDDLLSEIR…GLNKKVVDIL (167 aa)). Residues 608–627 (AKGRGKSRPIVEPDNVPMDM) are disordered. The region spanning 633–668 (QQKIHELEGLMMQHAQNLEFEEAAQIRDQLHLLREL) is the UVR domain.

This sequence belongs to the UvrB family. In terms of assembly, forms a heterotetramer with UvrA during the search for lesions. Interacts with UvrC in an incision complex.

Its subcellular location is the cytoplasm. Functionally, the UvrABC repair system catalyzes the recognition and processing of DNA lesions. A damage recognition complex composed of 2 UvrA and 2 UvrB subunits scans DNA for abnormalities. Upon binding of the UvrA(2)B(2) complex to a putative damaged site, the DNA wraps around one UvrB monomer. DNA wrap is dependent on ATP binding by UvrB and probably causes local melting of the DNA helix, facilitating insertion of UvrB beta-hairpin between the DNA strands. Then UvrB probes one DNA strand for the presence of a lesion. If a lesion is found the UvrA subunits dissociate and the UvrB-DNA preincision complex is formed. This complex is subsequently bound by UvrC and the second UvrB is released. If no lesion is found, the DNA wraps around the other UvrB subunit that will check the other stand for damage. This Escherichia coli O81 (strain ED1a) protein is UvrABC system protein B.